Reading from the N-terminus, the 770-residue chain is DNA topoisomerase 1 (770 aa).

A Toprim domain is found at 4–140 (FRIIIAEKAD…EIRRAKFSAL (137 aa)). Residues Glu10 and Asp109 each coordinate Mg(2+). The region spanning 156-563 (NYSLADAADA…ESKKMLHEVL (408 aa)) is the Topo IA-type catalytic domain. The interaction with DNA stretch occupies residues 194 to 199 (SAGRVQ). The O-(5'-phospho-DNA)-tyrosine intermediate role is filled by Tyr312. 3 consecutive C4-type zinc fingers follow at residues 611–638 (CEDPSCKINFRIKRNGSITLSDQKCPVC), 673–700 (CPADHGRLVLRQSKYGKRFLGCSNYPKC), and 719–744 (CPYCGAPILALSRNGRKWKFCPNMQC).

It belongs to the type IA topoisomerase family. As to quaternary structure, monomer. The cofactor is Mg(2+).

It catalyses the reaction ATP-independent breakage of single-stranded DNA, followed by passage and rejoining.. Functionally, releases the supercoiling and torsional tension of DNA, which is introduced during the DNA replication and transcription, by transiently cleaving and rejoining one strand of the DNA duplex. Introduces a single-strand break via transesterification at a target site in duplex DNA. The scissile phosphodiester is attacked by the catalytic tyrosine of the enzyme, resulting in the formation of a DNA-(5'-phosphotyrosyl)-enzyme intermediate and the expulsion of a 3'-OH DNA strand. The free DNA strand then undergoes passage around the unbroken strand, thus removing DNA supercoils. Finally, in the religation step, the DNA 3'-OH attacks the covalent intermediate to expel the active-site tyrosine and restore the DNA phosphodiester backbone. The sequence is that of DNA topoisomerase 1 from Thermoplasma acidophilum (strain ATCC 25905 / DSM 1728 / JCM 9062 / NBRC 15155 / AMRC-C165).